We begin with the raw amino-acid sequence, 357 residues long: Dihydroorotate dehydrogenase (quinone) (357 aa).

FMN-binding positions include 66-70 and Thr-90; that span reads AGFDK. Position 70 (Lys-70) interacts with substrate. 115-119 contributes to the substrate binding site; sequence NRMGF. FMN-binding residues include Asn-143 and Asn-176. Asn-176 is a binding site for substrate. Ser-179 acts as the Nucleophile in catalysis. Asn-181 is a binding site for substrate. Residues Lys-212 and Thr-240 each coordinate FMN. Substrate is bound at residue 241–242; that stretch reads NT. FMN is bound by residues Gly-264, Gly-293, and 314–315; that span reads YT.

It belongs to the dihydroorotate dehydrogenase family. Type 2 subfamily. In terms of assembly, monomer. FMN is required as a cofactor.

It localises to the cell membrane. The enzyme catalyses (S)-dihydroorotate + a quinone = orotate + a quinol. It participates in pyrimidine metabolism; UMP biosynthesis via de novo pathway; orotate from (S)-dihydroorotate (quinone route): step 1/1. Functionally, catalyzes the conversion of dihydroorotate to orotate with quinone as electron acceptor. The polypeptide is Dihydroorotate dehydrogenase (quinone) (Mycobacterium tuberculosis (strain ATCC 25177 / H37Ra)).